Consider the following 464-residue polypeptide: 3-isopropylmalate dehydratase large subunit (464 aa).

Residues Cys337, Cys397, and Cys400 each coordinate [4Fe-4S] cluster.

This sequence belongs to the aconitase/IPM isomerase family. LeuC type 1 subfamily. As to quaternary structure, heterodimer of LeuC and LeuD. Requires [4Fe-4S] cluster as cofactor.

It carries out the reaction (2R,3S)-3-isopropylmalate = (2S)-2-isopropylmalate. It participates in amino-acid biosynthesis; L-leucine biosynthesis; L-leucine from 3-methyl-2-oxobutanoate: step 2/4. In terms of biological role, catalyzes the isomerization between 2-isopropylmalate and 3-isopropylmalate, via the formation of 2-isopropylmaleate. This chain is 3-isopropylmalate dehydratase large subunit, found in Bacillus cytotoxicus (strain DSM 22905 / CIP 110041 / 391-98 / NVH 391-98).